Here is a 504-residue protein sequence, read N- to C-terminus: ATP synthase subunit alpha (504 aa).

171–178 lines the ATP pocket; the sequence is GDRQTGKT.

This sequence belongs to the ATPase alpha/beta chains family. As to quaternary structure, F-type ATPases have 2 components, CF(1) - the catalytic core - and CF(0) - the membrane proton channel. CF(1) has five subunits: alpha(3), beta(3), gamma(1), delta(1), epsilon(1). CF(0) has three main subunits: a(1), b(2) and c(9-12). The alpha and beta chains form an alternating ring which encloses part of the gamma chain. CF(1) is attached to CF(0) by a central stalk formed by the gamma and epsilon chains, while a peripheral stalk is formed by the delta and b chains.

The protein localises to the cell inner membrane. The catalysed reaction is ATP + H2O + 4 H(+)(in) = ADP + phosphate + 5 H(+)(out). In terms of biological role, produces ATP from ADP in the presence of a proton gradient across the membrane. The alpha chain is a regulatory subunit. The sequence is that of ATP synthase subunit alpha from Sulfurovum sp. (strain NBC37-1).